The chain runs to 170 residues: Cytochrome b6-f complex subunit 4 (170 aa).

A run of 3 helical transmembrane segments spans residues 36 to 56 (LLYI…GLAV), 95 to 115 (LLGV…PFLE), and 131 to 151 (TVFL…TLPI).

It belongs to the cytochrome b family. PetD subfamily. In terms of assembly, the 4 large subunits of the cytochrome b6-f complex are cytochrome b6, subunit IV (17 kDa polypeptide, petD), cytochrome f and the Rieske protein, while the 4 small subunits are petG, petL, petM and petN. The complex functions as a dimer.

It is found in the plastid. The protein resides in the chloroplast thylakoid membrane. Its function is as follows. Component of the cytochrome b6-f complex, which mediates electron transfer between photosystem II (PSII) and photosystem I (PSI), cyclic electron flow around PSI, and state transitions. In Nymphaea alba (White water-lily), this protein is Cytochrome b6-f complex subunit 4.